Reading from the N-terminus, the 881-residue chain is Mechanosensitive ion channel protein 5 (881 aa).

2 stretches are compositionally biased toward basic and acidic residues: residues 1–12 (MAAVDSTDRRDF) and 48–59 (DGEKGKNDKKGD). Positions 1-248 (MAAVDSTDRR…RNGFEEEEEE (248 aa)) are disordered. Residues 115 to 145 (ELQSNTPPRPATASNTPRRGLTTISESSSPV) are compositionally biased toward polar residues. Basic and acidic residues predominate over residues 169–179 (EEGRNRDEAEV). Ser-231 is modified (phosphoserine). The next 6 membrane-spanning stretches (helical) occupy residues 265 to 285 (LSFW…SLVC), 309 to 329 (VLVL…IVFL), 349 to 369 (KSVQ…FLFD), 387 to 407 (VLVC…LVKV), 642 to 662 (IINV…LGIA), and 677 to 697 (VAFV…FLFV). Residues 861 to 881 (PTANPTSSDRIPPSWMQQRGP) are disordered. Residues 864 to 881 (NPTSSDRIPPSWMQQRGP) are compositionally biased toward polar residues.

Belongs to the MscS (TC 1.A.23) family.

Its subcellular location is the membrane. In terms of biological role, mechanosensitive channel that opens in response to stretch forces in the membrane lipid bilayer. The sequence is that of Mechanosensitive ion channel protein 5 (MSL5) from Arabidopsis thaliana (Mouse-ear cress).